A 547-amino-acid chain; its full sequence is MAKEIRFGEKARRSLEAGVNKLADTVKVTLGPKGRNVVIDKKFGSPLITNDGVTIAREIELEDAYENMGAQLVKEVATKTNDVAGDGTTTATLLAQAIIREGLKNVAAGANPMIIKKGIHKAVDAAVAELKAVSKSIESKEAIAQVGAISAADEEIGQLIADAMDKVGKDGVITVEESKSMGTTLDVVEGMQFDRGYLSPYMVTDTEKMEAVFNDAYILVTDKKISNIQEILPILEQIVQQGKKLVIIAEDIEGEALATLVVNKLRGTFECVAVKAPGFGDRRKSMLDDIAVLTGATVISEELGYDLKTATVDMLGTARTVKVDKENTTIVEGAGNQQLIKDRVSQIKKQIEETTSDFDKEKLQERLAKLSGGVAVIQVGAATETELKERKLRIEDALNATRAAVEEGIVAGGGTALVNVIPAVEALLEGSQGDEKTGIQIIRRALEEPLRQIAENAGLEGSVIVNKVMSSDKGIGYDVLNNKYVNMIEAGIVDPTKVTRSALQNAASISAMLLTTESAVVDIASEEPGMPGGMGGMGGMGGGMPMM.

Residues 29–32 (TLGP), 86–90 (DGTTT), Gly-413, 478–480 (DVL), and Asp-494 each bind ATP.

It belongs to the chaperonin (HSP60) family. In terms of assembly, forms a cylinder of 14 subunits composed of two heptameric rings stacked back-to-back. Interacts with the co-chaperonin GroES.

The protein resides in the cytoplasm. It catalyses the reaction ATP + H2O + a folded polypeptide = ADP + phosphate + an unfolded polypeptide.. Functionally, together with its co-chaperonin GroES, plays an essential role in assisting protein folding. The GroEL-GroES system forms a nano-cage that allows encapsulation of the non-native substrate proteins and provides a physical environment optimized to promote and accelerate protein folding. The polypeptide is Chaperonin GroEL (Alkaliphilus metalliredigens (strain QYMF)).